A 169-amino-acid polypeptide reads, in one-letter code: Peptide deformylase (169 aa).

Fe cation-binding residues include cysteine 91 and histidine 133. Glutamate 134 is an active-site residue. Histidine 137 is a Fe cation binding site.

Belongs to the polypeptide deformylase family. Fe(2+) serves as cofactor.

The catalysed reaction is N-terminal N-formyl-L-methionyl-[peptide] + H2O = N-terminal L-methionyl-[peptide] + formate. In terms of biological role, removes the formyl group from the N-terminal Met of newly synthesized proteins. Requires at least a dipeptide for an efficient rate of reaction. N-terminal L-methionine is a prerequisite for activity but the enzyme has broad specificity at other positions. The protein is Peptide deformylase of Haemophilus influenzae (strain ATCC 51907 / DSM 11121 / KW20 / Rd).